A 132-amino-acid chain; its full sequence is Replication enhancer protein (132 aa).

It belongs to the geminiviridae replication enhancer protein family. As to quaternary structure, homooligomer. Interacts with the replication-associated protein (REP). Interacts with host proliferating cell nuclear antigen (PCNA). Interacts with host retinoblastoma-related protein 1 (RBR1), and may thereby deregulate the host cell cycle. Oligomerization and interaction with PCNA are necessary for optimal replication enhancement.

In terms of biological role, increases viral DNA accumulation. Enhances infectivity and symptom expression. The polypeptide is Replication enhancer protein (Macroptilium lathyroides (Lima bean)).